The sequence spans 129 residues: Glycine cleavage system H protein (129 aa).

The region spanning Thr-24–Arg-106 is the Lipoyl-binding domain. Lys-65 is modified (N6-lipoyllysine).

It belongs to the GcvH family. The glycine cleavage system is composed of four proteins: P, T, L and H. Requires (R)-lipoate as cofactor.

Functionally, the glycine cleavage system catalyzes the degradation of glycine. The H protein shuttles the methylamine group of glycine from the P protein to the T protein. This Gloeobacter violaceus (strain ATCC 29082 / PCC 7421) protein is Glycine cleavage system H protein.